The primary structure comprises 335 residues: tRNA N6-adenosine threonylcarbamoyltransferase (335 aa).

Residues histidine 109, histidine 113, and tyrosine 130 each coordinate a divalent metal cation. Residues 130-134 (YVSGG), aspartate 162, glycine 177, glutamate 181, and asparagine 266 each bind substrate. Residue aspartate 294 participates in a divalent metal cation binding.

Belongs to the KAE1 / TsaD family. Component of the EKC/KEOPS complex composed of at least tp53rk, tprkb, osgep and lage3; the whole complex dimerizes. A divalent metal cation serves as cofactor.

The protein localises to the cytoplasm. The protein resides in the nucleus. It catalyses the reaction L-threonylcarbamoyladenylate + adenosine(37) in tRNA = N(6)-L-threonylcarbamoyladenosine(37) in tRNA + AMP + H(+). Component of the EKC/KEOPS complex that is required for the formation of a threonylcarbamoyl group on adenosine at position 37 (t(6)A37) in tRNAs that read codons beginning with adenine. The complex is probably involved in the transfer of the threonylcarbamoyl moiety of threonylcarbamoyl-AMP (TC-AMP) to the N6 group of A37. OSGEP likely plays a direct catalytic role in this reaction, but requires other protein(s) of the complex to fulfill this activity. The protein is tRNA N6-adenosine threonylcarbamoyltransferase of Danio rerio (Zebrafish).